A 306-amino-acid polypeptide reads, in one-letter code: Replication termination factor 2 (306 aa).

The disordered stretch occupies residues 192-306; sequence RAKLEKKTKK…HWVTHTSYCF (115 aa). Residues 226–240 are compositionally biased toward basic and acidic residues; the sequence is GKSEEADPDPREKKS. A Phosphoserine modification is found at Ser287.

It belongs to the rtf2 family. In terms of assembly, interacts with DDI2; probably also interacts with DDI1. Undergoes proteasomal degradation, via DDI1 and DDI2. Removal from stalled replisomes and degradation are required for genome stability.

Its subcellular location is the chromosome. Replication termination factor which is a component of the elongating replisome. Required for ATR pathway signaling upon DNA damage and has a positive activity during DNA replication. Might function to facilitate fork pausing at replication fork barriers like the rDNA. May be globally required to stimulate ATR signaling after the fork stalls or encounters a lesion. Interacts with nascent DNA. The polypeptide is Replication termination factor 2 (Rattus norvegicus (Rat)).